A 54-amino-acid polypeptide reads, in one-letter code: UPF0181 protein APJL_0874 (54 aa).

It belongs to the UPF0181 family.

The chain is UPF0181 protein APJL_0874 from Actinobacillus pleuropneumoniae serotype 3 (strain JL03).